A 637-amino-acid chain; its full sequence is MPVITLPNGSKREFSNPITVLDVAADIGPGLAKATLAGIVDGKEVDAGFTIEQDAALSIVTEKSPEGLEVIRHSTAHLLAQAVKSLFPEAQVTIGPVIDDGFYYDFAYSRAFTPEDLAAIEKKMTELSEQDIPVSRRVLPRDEAVAFFRGIGEDYKAEIIESIPANEDLSLYKQGDFEDLCRGPHVPSTGKLKYFKLMKVAGAYWRGDAKNEMLQRIYGTAWANKKDLKAYLHRLEEAEKRDHRKLGKKFDLFHLQEEAPGMVFWHPKGWSVYTAIEQYMRKVQRENGYKEIKTPQVVDRSLWERSGHWDKFRDGMFTVESESRDYAVKPMNCPCHIQVFNQGLKSYRDLPLRFAEFGSCHRNEASGTLQGIMRVRAFTQDDGHIFCAEDAIQSEVSIFTDLLYEVYRDFGFEDVIIRLSTRPEQRVGSEEVWDKSEKALADALNAKGLAFEYLPGEGAFYGPKIEFSLKDCIGRVWQCGTIQVDFSMPARLDAQFVAEDGSRQVPVMLHRAILGSFERFIGILIENYEGAFPPWLAPEQVVVMNITDNQAEYAEKVRNSLQNEGFRVVSDLRNEKIGFKIREHTIQKVPYLLVVGDQEMENNSVAVRTREGKDLGTYSVDDFATLLADSVAKRGRA.

In terms of domain architecture, TGS spans 1 to 61; it reads MPVITLPNGS…EQDAALSIVT (61 aa). The interval 242–533 is catalytic; sequence DHRKLGKKFD…LIENYEGAFP (292 aa). Zn(2+) contacts are provided by Cys333, His384, and His510.

The protein belongs to the class-II aminoacyl-tRNA synthetase family. Homodimer. Zn(2+) serves as cofactor.

The protein localises to the cytoplasm. The catalysed reaction is tRNA(Thr) + L-threonine + ATP = L-threonyl-tRNA(Thr) + AMP + diphosphate + H(+). Catalyzes the attachment of threonine to tRNA(Thr) in a two-step reaction: L-threonine is first activated by ATP to form Thr-AMP and then transferred to the acceptor end of tRNA(Thr). Also edits incorrectly charged L-seryl-tRNA(Thr). The polypeptide is Threonine--tRNA ligase (Teredinibacter turnerae (strain ATCC 39867 / T7901)).